Here is a 127-residue protein sequence, read N- to C-terminus: MANFLTKNFVWILAAGVGVWFYQKADNAAKTATKPIADFLAELQFLVNGSNYVKFPNAGFVLTRDALQDDFIAYDDRIKAWLGTHDRHKDFLAEILDHERRVKPVYRKLIGNIIDASTIRAASGVEL.

The protein localises to the virion membrane. The sequence is that of Protein P6 (VI) from Pseudoalteromonas espejiana (Bacteriophage PM2).